The chain runs to 390 residues: Protein AC109 (390 aa).

The protein localises to the host cytoplasm. Its subcellular location is the host nucleus. Its function is as follows. Plays a role in the transport of the budded virion (BV) to the host nucleus and for occlusion of viral progeny. This Lepidoptera (butterflies and moths) protein is Protein AC109 (ORF109).